We begin with the raw amino-acid sequence, 87 residues long: Defensin-like protein 218 (87 aa).

The first 19 residues, 1–19, serve as a signal peptide directing secretion; it reads MKTIVCFLTILILVSSCES. 3 cysteine pairs are disulfide-bonded: Cys-51-Cys-70, Cys-54-Cys-75, and Cys-58-Cys-77.

It belongs to the DEFL family.

The protein resides in the secreted. This chain is Defensin-like protein 218, found in Arabidopsis thaliana (Mouse-ear cress).